Reading from the N-terminus, the 561-residue chain is GPI mannosyltransferase 3 (561 aa).

The next 8 membrane-spanning stretches (helical) occupy residues 3-25 (LIYVFLLILAVRLASVFVVQTYY), 64-84 (IAGLYKILALLQLDSAHLLVV), 110-130 (WALFLILVPWFWFYTGSRTLA), 155-175 (LWPAAICCFLRPTAAVIWLPL), 195-215 (FVLIGLLVAGLGIAIDTYWHG), 246-266 (FSVGLPTVLGINTLPFIFGVM), 275-295 (YPVSKQLLITIFLTLVVLSAV), and 328-348 (TMLWTTALVILVGNVMPAWYL). Asn-398 and Asn-456 each carry an N-linked (GlcNAc...) asparagine glycan. Residues 525–546 (ENAFNRGPDSGQHEPDVHDHPP) are disordered. The span at 535–546 (GQHEPDVHDHPP) shows a compositional bias: basic and acidic residues.

This sequence belongs to the glycosyltransferase 22 family. PIGB subfamily.

It is found in the endoplasmic reticulum membrane. Its pathway is glycolipid biosynthesis; glycosylphosphatidylinositol-anchor biosynthesis. Functionally, mannosyltransferase involved in glycosylphosphatidylinositol-anchor biosynthesis. Transfers the third alpha-1,2-mannose to Man2-GlcN-acyl-PI during GPI precursor assembly. The sequence is that of GPI mannosyltransferase 3 from Drosophila melanogaster (Fruit fly).